Reading from the N-terminus, the 344-residue chain is Arylacetonitrilase (344 aa).

The region spanning 5–290 (LRVAVTQAEP…EGIVYADLDL (286 aa)) is the CN hydrolase domain. Glu45 (proton acceptor) is an active-site residue. Lys126 is an active-site residue. Cys167 (nucleophile) is an active-site residue. Residues 324–344 (VIPRDEEEPSRKANVVVPKQE) form a disordered region.

Belongs to the carbon-nitrogen hydrolase superfamily. Nitrilase family.

The catalysed reaction is a nitrile + 2 H2O = a carboxylate + NH4(+). It catalyses the reaction 4-chlorophenylacetonitrile + 2 H2O = 4-chlorophenylacetate + NH4(+). Functionally, nitrilase that hydrolyzes preferentially phenylacetonitrile and (R,S)-mandelonitrile. Also acts on dinitriles like phenylenediacetonitriles (PDAs) 1,2-PDA, 1,3-PDA, and 1,4-PDA, and cyanophenyl acetonitriles (CPAs) 2-CPA and 4-CPA. In Macrophomina phaseolina (strain MS6) (Charcoal rot fungus), this protein is Arylacetonitrilase.